A 249-amino-acid chain; its full sequence is MEMKQINETTLKIMITMEDLEEHGMELKDFLIPQEKTEEFFYTVMDELDLPDNFKNSGMLSFRVTPRKDRVDVFVNKSDLKEALDFNDLSDMEDYSGLSPEEFLKALEDNFMDKGDIEAHHKLEEHDKTLKEVDETMTEPAKEVAEETIREDYTHYVLAFSDFDQVVTFAQGLKNVSVEGSEFYKLGDVYYMTILLYLADEPDYYANNMYARFLEYANVADRTRPYLQEHATILMEEDALPVLQATKWS.

Belongs to the MecA family. As to quaternary structure, homodimer.

In terms of biological role, enables the recognition and targeting of unfolded and aggregated proteins to the ClpC protease or to other proteins involved in proteolysis. The chain is Adapter protein MecA from Streptococcus thermophilus (strain CNRZ 1066).